Reading from the N-terminus, the 179-residue chain is Peptidyl-tRNA hydrolase (179 aa).

A tRNA-binding site is contributed by Tyr14. His19 functions as the Proton acceptor in the catalytic mechanism. TRNA is bound by residues Tyr61, Asn63, and Asn107.

The protein belongs to the PTH family. As to quaternary structure, monomer.

The protein resides in the cytoplasm. It catalyses the reaction an N-acyl-L-alpha-aminoacyl-tRNA + H2O = an N-acyl-L-amino acid + a tRNA + H(+). Its function is as follows. Hydrolyzes ribosome-free peptidyl-tRNAs (with 1 or more amino acids incorporated), which drop off the ribosome during protein synthesis, or as a result of ribosome stalling. Catalyzes the release of premature peptidyl moieties from peptidyl-tRNA molecules trapped in stalled 50S ribosomal subunits, and thus maintains levels of free tRNAs and 50S ribosomes. The protein is Peptidyl-tRNA hydrolase of Campylobacter lari (strain RM2100 / D67 / ATCC BAA-1060).